The chain runs to 559 residues: Protochlorophyllide-dependent translocon component 52, chloroplastic (559 aa).

A chloroplast-targeting transit peptide spans 1–55 (MEAALAACALPSLRILNTKPRFRCSFSNPSLPISPNSLITRKSSRFTTAVSSPPS). The segment at 44–70 (SRFTTAVSSPPSSSAATSTNSPPEPEA) is disordered. Residues 47 to 64 (TTAVSSPPSSSAATSTNS) are compositionally biased toward low complexity. In terms of domain architecture, Rieske spans 85 to 195 (WYPVMPICDL…STVQHEIIWF (111 aa)). [2Fe-2S] cluster-binding residues include Cys-127, His-129, Cys-147, and His-150. His-248 and His-253 together coordinate Fe cation. Residues 483–486 (CSSC) carry the Redox-active motif motif. 2 helical membrane-spanning segments follow: residues 493–513 (LNALEVILQIASVAMIGVMAV) and 525–545 (IAVLVAAVLSFAASKWLSHFI).

Requires [2Fe-2S] cluster as cofactor.

The protein localises to the plastid. Its subcellular location is the chloroplast inner membrane. It catalyses the reaction protochlorophyllide a + 4 reduced [2Fe-2S]-[ferredoxin] + 2 O2 + 5 H(+) = protochlorophyllide b + 4 oxidized [2Fe-2S]-[ferredoxin] + 3 H2O. With respect to regulation, down-regulated by light. Its function is as follows. Part of a translocon most abundantly expressed in etiolated plants and involved in the protochlorophyllide-dependent import of the precursor NADPH:protochlorophyllide oxidoreductase A (pPORA). This is Protochlorophyllide-dependent translocon component 52, chloroplastic from Arabidopsis thaliana (Mouse-ear cress).